A 397-amino-acid chain; its full sequence is Erythromycin C-12 hydroxylase (397 aa).

Residue 74–75 (HE) coordinates substrate. The heme site is built by His81 and Arg85. Gln278 is a binding site for substrate. Arg279 contacts heme. Residues 307-322 (RDSDAHDDPDRFDPSR) show a composition bias toward basic and acidic residues. A disordered region spans residues 307–326 (RDSDAHDDPDRFDPSRKSGG). Heme contacts are provided by His337 and Cys339.

It belongs to the cytochrome P450 family. Monomer. Heme b serves as cofactor.

It carries out the reaction erythromycin D + NADPH + O2 + H(+) = erythromycin C + NADP(+) + H2O. Its pathway is antibiotic biosynthesis; erythromycin biosynthesis. In terms of biological role, responsible for the C-12 hydroxylation of the macrolactone ring of erythromycin. Thus, EryK catalyzes the hydroxylation of erythromycin D (ErD) at the C-12 position to produce erythromycin C (ErC). Erythromycin B (ErB) is not a substrate for this enzyme. The polypeptide is Erythromycin C-12 hydroxylase (eryK) (Saccharopolyspora erythraea (strain ATCC 11635 / DSM 40517 / JCM 4748 / NBRC 13426 / NCIMB 8594 / NRRL 2338)).